Reading from the N-terminus, the 66-residue chain is MRRALFIAGQTYLWLNLTHLLLIFSWSSTMAFSQSRRLLTPTVPCPTLLGIDFLILVLRHFDEIFI.

Helical transmembrane passes span 4 to 24 (ALFI…LLIF) and 38 to 58 (LLTP…ILVL).

Its subcellular location is the membrane. This is an uncharacterized protein from Saccharomyces cerevisiae (strain ATCC 204508 / S288c) (Baker's yeast).